The sequence spans 350 residues: Arabinogalactan endo-beta-1,4-galactanase A (350 aa).

Positions 1–17 (MILSSLLPLSLVTLTSA) are cleaved as a signal peptide. Asn-129 carries an N-linked (GlcNAc...) asparagine glycan. The active-site Proton donor is Glu-153. Glu-263 (nucleophile) is an active-site residue.

It belongs to the glycosyl hydrolase 53 family.

The protein resides in the secreted. It carries out the reaction The enzyme specifically hydrolyzes (1-&gt;4)-beta-D-galactosidic linkages in type I arabinogalactans.. Endogalactanase involved in the degradation of plant cell wall polysaccharides, and more particularly of hairy regions of pectin. This Emericella nidulans (strain FGSC A4 / ATCC 38163 / CBS 112.46 / NRRL 194 / M139) (Aspergillus nidulans) protein is Arabinogalactan endo-beta-1,4-galactanase A (galA).